The primary structure comprises 372 residues: Queuine tRNA-ribosyltransferase (372 aa).

Aspartate 92 acts as the Proton acceptor in catalysis. Substrate-binding positions include 92–96, aspartate 146, glutamine 188, and glycine 215; that span reads DSGGY. The RNA binding stretch occupies residues 246–252; sequence GIGSLRE. Aspartate 265 functions as the Nucleophile in the catalytic mechanism. The segment at 270–274 is RNA binding; important for wobble base 34 recognition; sequence TRLGR. The Zn(2+) site is built by cysteine 303, cysteine 305, cysteine 308, and histidine 334.

The protein belongs to the queuine tRNA-ribosyltransferase family. As to quaternary structure, homodimer. Within each dimer, one monomer is responsible for RNA recognition and catalysis, while the other monomer binds to the replacement base PreQ1. Zn(2+) is required as a cofactor.

The catalysed reaction is 7-aminomethyl-7-carbaguanine + guanosine(34) in tRNA = 7-aminomethyl-7-carbaguanosine(34) in tRNA + guanine. It functions in the pathway tRNA modification; tRNA-queuosine biosynthesis. Catalyzes the base-exchange of a guanine (G) residue with the queuine precursor 7-aminomethyl-7-deazaguanine (PreQ1) at position 34 (anticodon wobble position) in tRNAs with GU(N) anticodons (tRNA-Asp, -Asn, -His and -Tyr). Catalysis occurs through a double-displacement mechanism. The nucleophile active site attacks the C1' of nucleotide 34 to detach the guanine base from the RNA, forming a covalent enzyme-RNA intermediate. The proton acceptor active site deprotonates the incoming PreQ1, allowing a nucleophilic attack on the C1' of the ribose to form the product. After dissociation, two additional enzymatic reactions on the tRNA convert PreQ1 to queuine (Q), resulting in the hypermodified nucleoside queuosine (7-(((4,5-cis-dihydroxy-2-cyclopenten-1-yl)amino)methyl)-7-deazaguanosine). The protein is Queuine tRNA-ribosyltransferase of Prochlorococcus marinus (strain MIT 9312).